Consider the following 493-residue polypeptide: 3-octaprenyl-4-hydroxybenzoate carboxy-lyase (493 aa).

Asparagine 172 serves as a coordination point for Mn(2+). Prenylated FMN-binding positions include 175–177 (IYR), 189–191 (RWL), and 194–195 (RG). Glutamate 238 serves as a coordination point for Mn(2+). The Proton donor role is filled by aspartate 287.

Belongs to the UbiD family. Homohexamer. Prenylated FMN is required as a cofactor. Requires Mn(2+) as cofactor.

It localises to the cell membrane. It catalyses the reaction a 4-hydroxy-3-(all-trans-polyprenyl)benzoate + H(+) = a 2-(all-trans-polyprenyl)phenol + CO2. The protein operates within cofactor biosynthesis; ubiquinone biosynthesis. In terms of biological role, catalyzes the decarboxylation of 3-octaprenyl-4-hydroxy benzoate to 2-octaprenylphenol, an intermediate step in ubiquinone biosynthesis. In Shewanella halifaxensis (strain HAW-EB4), this protein is 3-octaprenyl-4-hydroxybenzoate carboxy-lyase.